The chain runs to 197 residues: Small ribosomal subunit protein uS4B (197 aa).

One can recognise an S4 RNA-binding domain in the interval 88–151; that stretch reads CRLDNIAYRI…RKNDEFADNF (64 aa).

This sequence belongs to the universal ribosomal protein uS4 family. Part of the 30S ribosomal subunit. Contacts protein S5. The interaction surface between S4 and S5 is involved in control of translational fidelity.

One of the primary rRNA binding proteins, it binds directly to 16S rRNA where it nucleates assembly of the body of the 30S subunit. Functionally, with S5 and S12 plays an important role in translational accuracy. This Clostridium botulinum (strain Langeland / NCTC 10281 / Type F) protein is Small ribosomal subunit protein uS4B.